The chain runs to 74 residues: ATP synthase subunit c (74 aa).

2 helical membrane-spanning segments follow: residues isoleucine 9 to phenylalanine 29 and phenylalanine 54 to valine 74.

The protein belongs to the ATPase C chain family. F-type ATPases have 2 components, F(1) - the catalytic core - and F(0) - the membrane proton channel. F(1) has five subunits: alpha(3), beta(3), gamma(1), delta(1), epsilon(1). F(0) has three main subunits: a(1), b(2) and c(10-14). The alpha and beta chains form an alternating ring which encloses part of the gamma chain. F(1) is attached to F(0) by a central stalk formed by the gamma and epsilon chains, while a peripheral stalk is formed by the delta and b chains.

It is found in the cell inner membrane. In terms of biological role, f(1)F(0) ATP synthase produces ATP from ADP in the presence of a proton or sodium gradient. F-type ATPases consist of two structural domains, F(1) containing the extramembraneous catalytic core and F(0) containing the membrane proton channel, linked together by a central stalk and a peripheral stalk. During catalysis, ATP synthesis in the catalytic domain of F(1) is coupled via a rotary mechanism of the central stalk subunits to proton translocation. Functionally, key component of the F(0) channel; it plays a direct role in translocation across the membrane. A homomeric c-ring of between 10-14 subunits forms the central stalk rotor element with the F(1) delta and epsilon subunits. The protein is ATP synthase subunit c of Gluconacetobacter diazotrophicus (strain ATCC 49037 / DSM 5601 / CCUG 37298 / CIP 103539 / LMG 7603 / PAl5).